A 623-amino-acid polypeptide reads, in one-letter code: Glutathione import ATP-binding protein GsiA (623 aa).

2 consecutive ABC transporter domains span residues 15 to 269 and 314 to 564; these read VENL…RALL and LRVR…RKLL. Residues 49–56 and 357–364 contribute to the ATP site; these read GESGSGKS.

It belongs to the ABC transporter superfamily. Glutathione importer (TC 3.A.1.5.11) family. The complex is composed of two ATP-binding proteins (GsiA), two transmembrane proteins (GsiC and GsiD) and a solute-binding protein (GsiB).

Its subcellular location is the cell inner membrane. It carries out the reaction glutathione(out) + ATP + H2O = glutathione(in) + ADP + phosphate + H(+). Part of the ABC transporter complex GsiABCD involved in glutathione import. Responsible for energy coupling to the transport system. The chain is Glutathione import ATP-binding protein GsiA from Shigella sonnei (strain Ss046).